Here is a 254-residue protein sequence, read N- to C-terminus: Imidazole glycerol phosphate synthase subunit HisF (254 aa).

Residues Asp-12 and Asp-131 contribute to the active site.

This sequence belongs to the HisA/HisF family. As to quaternary structure, heterodimer of HisH and HisF.

It is found in the cytoplasm. It carries out the reaction 5-[(5-phospho-1-deoxy-D-ribulos-1-ylimino)methylamino]-1-(5-phospho-beta-D-ribosyl)imidazole-4-carboxamide + L-glutamine = D-erythro-1-(imidazol-4-yl)glycerol 3-phosphate + 5-amino-1-(5-phospho-beta-D-ribosyl)imidazole-4-carboxamide + L-glutamate + H(+). The protein operates within amino-acid biosynthesis; L-histidine biosynthesis; L-histidine from 5-phospho-alpha-D-ribose 1-diphosphate: step 5/9. IGPS catalyzes the conversion of PRFAR and glutamine to IGP, AICAR and glutamate. The HisF subunit catalyzes the cyclization activity that produces IGP and AICAR from PRFAR using the ammonia provided by the HisH subunit. The sequence is that of Imidazole glycerol phosphate synthase subunit HisF from Corynebacterium aurimucosum (strain ATCC 700975 / DSM 44827 / CIP 107346 / CN-1) (Corynebacterium nigricans).